The chain runs to 493 residues: Aluminum-activated malate transporter 1 (493 aa).

A run of 5 helical transmembrane segments spans residues 28-48 (VGLALVLVSSFYYYQPFGPFT), 51-71 (FGINAMWAVMTVVVVFEFSVG), 104-124 (TVEPILLVMLVFVQAALSTFV), 133-153 (KFDYGILIFILTFALISLSGF), and 169-189 (VVIGGVSCILISIFVCPVWAG). Residues Ser320 and Ser327 each carry the phosphoserine modification. Position 385 is a phosphothreonine (Thr385). Basic and acidic residues predominate over residues 441 to 452 (DNDRSNNVDDSR). The disordered stretch occupies residues 441-460 (DNDRSNNVDDSRGGSSQDSC).

Belongs to the aromatic acid exporter (TC 2.A.85) family. In terms of processing, phosphorylated. A reversible phosphorylation is required for activation. As to expression, expressed in roots, but not in shoots. Detected in the root apex in absence of aluminum stress and in root apices, the stele and endodermis of the elongating zone of primary and lateral roots after aluminum stress. Not expressed in cortical and epidermal cells.

The protein resides in the cell membrane. Its activity is regulated as follows. Activated by external aluminum. Functionally, malate transporter critical for aluminum tolerance. The STOP1 transcription factor is required for ALMT1 expression. The protein is Aluminum-activated malate transporter 1 (ALMT1) of Arabidopsis thaliana (Mouse-ear cress).